A 1722-amino-acid chain; its full sequence is Lymphocyte antigen 75 (1722 aa).

Positions 1 to 27 are cleaved as a signal peptide; the sequence is MRTGWATPRRPAGLLMLLFWFFDLAEP. Residues 28–1666 lie on the Extracellular side of the membrane; that stretch reads SGRAANDPFT…VVCKVPLGPD (1639 aa). The 124-residue stretch at 33–156 folds into the Ricin B-type lectin domain; that stretch reads NDPFTIVHGN…ESLCDQPYHE (124 aa). Asn135 is a glycosylation site (N-linked (GlcNAc...) asparagine). A Fibronectin type-II domain is found at 164 to 211; the sequence is SYGRPCEFPFLIDGTWHHDCILDEDHSGPWCATTLNYEYDRKWGICLK. Cystine bridges form between Cys169/Cys194, Cys183/Cys209, Cys247/Cys340, and Cys317/Cys332. In terms of domain architecture, C-type lectin 1 spans 225 to 341; sequence QFGSCYQFNT…CEAQLPYVCR (117 aa). N-linked (GlcNAc...) asparagine glycans are attached at residues Asn345 and Asn377. 4 C-type lectin domains span residues 368–486, 493–625, 652–778, and 818–931; these read NNGF…YVCK, NDAS…ICKK, ASLS…IYLR, and IEGS…FICE. Disulfide bonds link Cys389-Cys485 and Cys462-Cys477. N-linked (GlcNAc...) asparagine glycosylation occurs at Asn529. Residues Cys597 and Cys614 are joined by a disulfide bond. 2 disulfide bridges follow: Cys840–Cys930 and Cys904–Cys922. N-linked (GlcNAc...) asparagine glycosylation is found at Asn843 and Asn865. Position 933 is a phosphotyrosine (Tyr933). Asn934, Asn1076, and Asn1103 each carry an N-linked (GlcNAc...) asparagine glycan. The C-type lectin 6 domain maps to 958 to 1091; that stretch reads FQNKCFLKIK…ERHFVSLCQK (134 aa). Cys1060 and Cys1080 are oxidised to a cystine. Positions 1110-1222 constitute a C-type lectin 7 domain; that stretch reads YLNNLYKIIP…DNQPGAICYY (113 aa). A disulfide bridge connects residues Cys1197 and Cys1211. Asn1225, Asn1320, and Asn1392 each carry an N-linked (GlcNAc...) asparagine glycan. One can recognise a C-type lectin 8 domain in the interval 1251–1374; it reads FQNCCYNFII…VIEEAVYFHQ (124 aa). 2 consecutive C-type lectin domains span residues 1401–1513 and 1542–1661; these read YEDG…ICYK and YKGH…VCKV. Cys1488 and Cys1502 are oxidised to a cystine. N-linked (GlcNAc...) asparagine glycosylation is found at Asn1593 and Asn1626. The cysteines at positions 1635 and 1650 are disulfide-linked. Residues 1667–1691 form a helical membrane-spanning segment; that stretch reads YTAIAIIVATLSILVLMGGLIWFLF. Over 1692-1722 the chain is Cytoplasmic; it reads QRHRLHLAGFSSVRYAQGVNEDEIMLPSFHD. Ser1703 and Ser1719 each carry phosphoserine.

N-glycosylated. Expressed in spleen, thymus, colon and peripheral blood lymphocytes. Detected in myeloid and B-lymphoid cell lines. Isoform 2 and isoform 3 are expressed in malignant Hodgkin lymphoma cells called Hodgkin and Reed-Sternberg (HRS) cells.

It is found in the membrane. Acts as an endocytic receptor to direct captured antigens from the extracellular space to a specialized antigen-processing compartment. Causes reduced proliferation of B-lymphocytes. This Homo sapiens (Human) protein is Lymphocyte antigen 75 (LY75).